The chain runs to 281 residues: Bifunctional protein FolD (281 aa).

Residues 165–167, threonine 192, and valine 233 contribute to the NADP(+) site; that span reads GRG.

This sequence belongs to the tetrahydrofolate dehydrogenase/cyclohydrolase family. Homodimer.

The enzyme catalyses (6R)-5,10-methylene-5,6,7,8-tetrahydrofolate + NADP(+) = (6R)-5,10-methenyltetrahydrofolate + NADPH. It catalyses the reaction (6R)-5,10-methenyltetrahydrofolate + H2O = (6R)-10-formyltetrahydrofolate + H(+). Its pathway is one-carbon metabolism; tetrahydrofolate interconversion. Its function is as follows. Catalyzes the oxidation of 5,10-methylenetetrahydrofolate to 5,10-methenyltetrahydrofolate and then the hydrolysis of 5,10-methenyltetrahydrofolate to 10-formyltetrahydrofolate. In Mycobacteroides abscessus (strain ATCC 19977 / DSM 44196 / CCUG 20993 / CIP 104536 / JCM 13569 / NCTC 13031 / TMC 1543 / L948) (Mycobacterium abscessus), this protein is Bifunctional protein FolD.